Reading from the N-terminus, the 455-residue chain is Bifunctional protein GlmU (455 aa).

Positions Met-1–Arg-230 are pyrophosphorylase. UDP-N-acetyl-alpha-D-glucosamine-binding positions include Leu-9–Gly-12, Lys-23, Gln-73, Gly-78–Thr-79, Ser-101–Asp-103, Gly-140, Glu-155, Asn-170, and Asn-228. Asp-103 is a Mg(2+) binding site. Asn-228 provides a ligand contact to Mg(2+). The tract at residues Val-231–Glu-251 is linker. The N-acetyltransferase stretch occupies residues Gly-252 to Trp-455. 2 residues coordinate UDP-N-acetyl-alpha-D-glucosamine: Arg-333 and Lys-351. His-363 serves as the catalytic Proton acceptor. Residues Tyr-366 and Asn-377 each coordinate UDP-N-acetyl-alpha-D-glucosamine. Residues Asn-386 to Tyr-387, Ser-405, Ala-423, and Arg-440 each bind acetyl-CoA.

The protein in the N-terminal section; belongs to the N-acetylglucosamine-1-phosphate uridyltransferase family. In the C-terminal section; belongs to the transferase hexapeptide repeat family. In terms of assembly, homotrimer. Requires Mg(2+) as cofactor.

It localises to the cytoplasm. The catalysed reaction is alpha-D-glucosamine 1-phosphate + acetyl-CoA = N-acetyl-alpha-D-glucosamine 1-phosphate + CoA + H(+). The enzyme catalyses N-acetyl-alpha-D-glucosamine 1-phosphate + UTP + H(+) = UDP-N-acetyl-alpha-D-glucosamine + diphosphate. Its pathway is nucleotide-sugar biosynthesis; UDP-N-acetyl-alpha-D-glucosamine biosynthesis; N-acetyl-alpha-D-glucosamine 1-phosphate from alpha-D-glucosamine 6-phosphate (route II): step 2/2. It functions in the pathway nucleotide-sugar biosynthesis; UDP-N-acetyl-alpha-D-glucosamine biosynthesis; UDP-N-acetyl-alpha-D-glucosamine from N-acetyl-alpha-D-glucosamine 1-phosphate: step 1/1. The protein operates within bacterial outer membrane biogenesis; LPS lipid A biosynthesis. Catalyzes the last two sequential reactions in the de novo biosynthetic pathway for UDP-N-acetylglucosamine (UDP-GlcNAc). The C-terminal domain catalyzes the transfer of acetyl group from acetyl coenzyme A to glucosamine-1-phosphate (GlcN-1-P) to produce N-acetylglucosamine-1-phosphate (GlcNAc-1-P), which is converted into UDP-GlcNAc by the transfer of uridine 5-monophosphate (from uridine 5-triphosphate), a reaction catalyzed by the N-terminal domain. This chain is Bifunctional protein GlmU, found in Limosilactobacillus reuteri (strain DSM 20016) (Lactobacillus reuteri).